The chain runs to 569 residues: MNKKFKKIVTEKKLTDAERIKENSNYLRGTITDDLKNEITNGFTGDNFSLIRFHGMYQQDDRDLRIERNEQKLEPRYAMMLRCRLPGGVIKAKKWLKIDYFASKYTLYGTIRLTNRQTFQFHGILKKNLKDVHKMLHSIGLDSLATANDVNRNVLCTSNPMESLIHQEAYEWARKISNFLLPHTKAYAEIWLDQKKIVTTEKEPILGKTYLPRKFKTTVVIPPYNDVDLYANDMNFVAITKNEKIIGFNILIGGGLSFIHGNKNTWPFLATEIGYISVENTLSIAKAIVTTQRDWGNRTDRANAKTRYTINNFGLNEFKKEIEKRANVNLKPVREYSFISRGDRFGWIKDINNNWSLTLFIQNGRIYDDNNKLFKSGLLKIANIHDGNFRITSNQNIIISEVSEKNKNKIEKIALSSGLINKSTNLRKNSMACVSFPTCPLAMAEAERMLSFFITQLENIMLKYGVEDEVIILRVSGCPNGCGRSLLAEIGLIGKSIGRYNLYIGGNRIGNRIPKIYKENITEQEILMHLKYLIKTWSNERKNKEDFGDFIVRKEFVKEVINPVYDFWS.

Positions 433, 439, 478, and 482 each coordinate [4Fe-4S] cluster. A siroheme-binding site is contributed by cysteine 482.

This sequence belongs to the nitrite and sulfite reductase 4Fe-4S domain family. In terms of assembly, alpha(8)-beta(8). The alpha component is a flavoprotein, the beta component is a hemoprotein. Siroheme serves as cofactor. Requires [4Fe-4S] cluster as cofactor.

The enzyme catalyses hydrogen sulfide + 3 NADP(+) + 3 H2O = sulfite + 3 NADPH + 4 H(+). It participates in sulfur metabolism; hydrogen sulfide biosynthesis; hydrogen sulfide from sulfite (NADPH route): step 1/1. Functionally, component of the sulfite reductase complex that catalyzes the 6-electron reduction of sulfite to sulfide. This is one of several activities required for the biosynthesis of L-cysteine from sulfate. In Buchnera aphidicola subsp. Acyrthosiphon pisum (strain Tuc7), this protein is Sulfite reductase [NADPH] hemoprotein beta-component.